A 499-amino-acid polypeptide reads, in one-letter code: Protein flp (499 aa).

The next 4 membrane-spanning stretches (helical) occupy residues L6–T26, F389–Y409, L433–L453, and L471–L491.

Its subcellular location is the cell membrane. Its precise function is unknown. Has no penicillin-binding activity and is not involved in methicillin resistance. This is Protein flp (flp) from Staphylococcus aureus (strain MRSA252).